A 56-amino-acid chain; its full sequence is Small ribosomal subunit protein uS14 (56 aa).

Zn(2+) is bound by residues Cys-21, Cys-24, Cys-39, and Cys-42.

Belongs to the universal ribosomal protein uS14 family. Zinc-binding uS14 subfamily. As to quaternary structure, part of the 30S ribosomal subunit. The cofactor is Zn(2+).

Functionally, binds 16S rRNA, required for the assembly of 30S particles. This Methanospirillum hungatei JF-1 (strain ATCC 27890 / DSM 864 / NBRC 100397 / JF-1) protein is Small ribosomal subunit protein uS14.